A 364-amino-acid chain; its full sequence is Thebaine 6-O-demethylase (364 aa).

Residues 214–314 (GTQAMRMNYY…RLSIATFHDP (101 aa)) form the Fe2OG dioxygenase domain. Residue Tyr223 participates in 2-oxoglutarate binding. The Fe cation site is built by His238, Asp240, and His295. The 2-oxoglutarate site is built by Arg305 and Ser307.

Belongs to the iron/ascorbate-dependent oxidoreductase family. Requires L-ascorbate as cofactor. The cofactor is Fe cation. Mainly expressed in stems and leaves and, to a lower extent, in capsules and roots.

The catalysed reaction is thebaine + 2-oxoglutarate + O2 = neopinone + formaldehyde + succinate + CO2. It carries out the reaction oripavine + 2-oxoglutarate + O2 = neomorphinone + formaldehyde + succinate + CO2. The enzyme catalyses (S)-canadine + S-adenosyl-L-methionine = (S)-cis-N-methylcanadine + S-adenosyl-L-homocysteine. It catalyses the reaction thebaine + 2-oxoglutarate + O2 = 6-O-demethylthebaine + formaldehyde + succinate + CO2 + H(+). The protein operates within alkaloid biosynthesis; morphine biosynthesis. Its activity is regulated as follows. Moderate substrate inhibition. Not inhibited in vitro by acylcyclohexanediones. Its function is as follows. Non-heme dioxygenase involved in biosynthesis of morphinan-type benzylisoquinoline and opiate alkaloids natural products. Mediates the conversion of thebaine to neopinone. Also catalyzes, with lower efficiency, the 6-O-demethylation of oripavine to neomorphinone, which is converted spontaneously to morphinone. Supports dealkylation reactions such as O,O-demethylenation in the metabolism of protopine, benzo[c]phenanthridine, and rhoeadine alkaloids; cleaves a methylenedioxy bridge leaving two hydroxyl groups. Catalyzes the O-demethylation of methylenedioxy bridges on protopine alkaloids such as allocryptopine. No activity with (S)-reticuline, salutaridine, papaverine, (S)-corytuberine, (S)-scoulerine, pavine, noscapine or codeine. The protein is Thebaine 6-O-demethylase of Papaver somniferum (Opium poppy).